The chain runs to 458 residues: Ectonucleotide pyrophosphatase/phosphodiesterase family member 7 (458 aa).

An N-terminal signal peptide occupies residues 1 to 21; sequence MRGPAVLLTVALATLLAPGAG. The Extracellular segment spans residues 22-433; it reads APVQSQGSQN…RPTLLPKGRS (412 aa). Residues Asp39 and Thr75 each contribute to the Zn(2+) site. The required for enzyme activity stretch occupies residues 72–78; it reads VTMTSPC. Thr75 serves as the catalytic Nucleophile. Asn96 contributes to the substrate binding site. Asn100, Asn121, Asn146, and Asn168 each carry an N-linked (GlcNAc...) asparagine glycan. Asp199, His203, Asp246, and His247 together coordinate Zn(2+). Residue Asn267 is glycosylated (N-linked (GlcNAc...) asparagine). His353 contributes to the Zn(2+) binding site. Residues 434–454 traverse the membrane as a helical segment; sequence ALPPSSRPLLVMGLLGTVILL. Residues 455–458 are Cytoplasmic-facing; the sequence is SEVA.

Belongs to the nucleotide pyrophosphatase/phosphodiesterase family. Zn(2+) serves as cofactor. N-glycosylated; required for activity and transport to the plasma membrane. In terms of tissue distribution, detected in the colon (at protein level). Expressed in the duodenum, jejunum and liver and at low levels in the ileum. Expression was very low in the esophagus, stomach and colon.

The protein resides in the cell membrane. It carries out the reaction a sphingomyelin + H2O = phosphocholine + an N-acylsphing-4-enine + H(+). The enzyme catalyses 1-hexadecanoyl-sn-glycero-3-phosphocholine + H2O = 1-hexadecanoyl-sn-glycerol + phosphocholine + H(+). The catalysed reaction is a 1-O-alkyl-2-acetyl-sn-glycero-3-phosphocholine + H2O = a 1-O-alkyl-2-acetyl-sn-glycerol + phosphocholine + H(+). It catalyses the reaction 1-O-octadecyl-2-acetyl-sn-glycero-3-phosphocholine + H2O = 1-O-octadecyl-2-acetyl-sn-glycerol + phosphocholine + H(+). Its activity is regulated as follows. Inhibited in a dose dependent manner by ATP, imidazole, orthovanadate and zinc ion. Not inhibited by ADP, AMP and EDTA. Choline-specific phosphodiesterase that hydrolyzes sphingomyelin releasing the ceramide and phosphocholine and therefore is involved in sphingomyelin digestion, ceramide formation, and fatty acid (FA) absorption in the gastrointestinal tract. Also has phospholipase C activity and can also cleave phosphocholine from palmitoyl lyso-phosphatidylcholine and platelet-activating factor (PAF) leading to its inactivation. Does not have nucleotide pyrophosphatase activity. May promote cholesterol absorption by affecting the levels of sphingomyelin derived from either diet or endogenous sources, in the intestinal lumen. The sequence is that of Ectonucleotide pyrophosphatase/phosphodiesterase family member 7 from Homo sapiens (Human).